Here is a 301-residue protein sequence, read N- to C-terminus: UDP-N-acetylenolpyruvoylglucosamine reductase (301 aa).

One can recognise an FAD-binding PCMH-type domain in the interval 26-193 (KTGGPAQYLA…VSATFGLEPG (168 aa)). Residue Arg-172 is part of the active site. Ser-222 acts as the Proton donor in catalysis. Residue Glu-292 is part of the active site.

The protein belongs to the MurB family. FAD is required as a cofactor.

The protein localises to the cytoplasm. The enzyme catalyses UDP-N-acetyl-alpha-D-muramate + NADP(+) = UDP-N-acetyl-3-O-(1-carboxyvinyl)-alpha-D-glucosamine + NADPH + H(+). It participates in cell wall biogenesis; peptidoglycan biosynthesis. In terms of biological role, cell wall formation. This chain is UDP-N-acetylenolpyruvoylglucosamine reductase, found in Lactobacillus johnsonii (strain CNCM I-12250 / La1 / NCC 533).